The primary structure comprises 79 residues: MAPPGHLLFLFLLPVAASQTNEGSCSGCGPLSLPLLAGLVAADAVMSLLIVGVVFVCMRLHSRPAQEDGRVYINMPGRG.

Residues 1–18 form the signal peptide; the sequence is MAPPGHLLFLFLLPVAAS. At 19 to 35 the chain is on the extracellular side; the sequence is QTNEGSCSGCGPLSLPL. A helical transmembrane segment spans residues 36 to 56; the sequence is LAGLVAADAVMSLLIVGVVFV. Topologically, residues 57 to 79 are cytoplasmic; the sequence is CMRLHSRPAQEDGRVYINMPGRG. Tyr-72 is modified (phosphotyrosine). The GRB2 binding site stretch occupies residues 72 to 74; the sequence is YIN. The interval 72–75 is PIK3R1 binding site; the sequence is YINM.

It belongs to the DAP10 family. As to quaternary structure, homodimer; Disulfide-linked. Heterohexamer composed of four subunits of HCST/DAP10 and two subunits of KLRK1. Interacts (via transmembrane domain) with KLRK1 (via transmembrane domain); the interaction is required for KLRK1 NK cell surface and induces NK cell-mediated cytotoxicity. Interacts with PIK3R1 and GRB2. Interacts with CLEC5A. Forms an CLEC5A/TYROBP/HCST trimolecular complex depending almost solely on TYROBP. Interacts with CD300H. In terms of processing, phosphorylated; PIK3R1 and GRB2 associate specifically with tyrosine-phosphorylated HCST. O-glycosylated.

Its subcellular location is the membrane. Its function is as follows. Transmembrane adapter protein which associates with KLRK1 to form an activation receptor KLRK1-HCST in lymphoid and myeloid cells; this receptor plays a major role in triggering cytotoxicity against target cells expressing cell surface ligands such as MHC class I chain-related MICA and MICB, and UL16-binding proteins (ULBPs); these ligands are up-regulated by stress conditions and pathological state such as viral infection and tumor transformation. Functions as a docking site for PI3-kinase PIK3R1 and GRB2. Interaction of ULBPs with KLRK1-HCST triggers calcium mobilization and activation of the PIK3R1, MAP2K/ERK, and JAK2/STAT5 signaling pathways. Both PIK3R1 and GRB2 are required for full KLRK1-HCST-mediated activation and ultimate killing of target cells. In NK cells, KLRK1-HCST signaling directly induces cytotoxicity and enhances cytokine production initiated via DAP12/TYROBP-associated receptors. In T-cells, it provides primarily costimulation for TCR-induced signals. KLRK1-HCST receptor plays a role in immune surveillance against tumors and is required for cytolysis of tumors cells; indeed, melanoma cells that do not express KLRK1 ligands escape from immune surveillance mediated by NK cells. The sequence is that of Hematopoietic cell signal transducer (Hcst) from Rattus norvegicus (Rat).